Reading from the N-terminus, the 238-residue chain is MPVDEQPTTPEAVQWRTIEDLPIHPSWRKVLEPVMDQIRDLGQFLTAETQAGRGFLPPEPDIFRAFSYPFEEVKVLILGQDPYPTPGHSMGLCFSTQPGVRPLPRSLVNIFKEMATDLGVSINATDGDLRPWSRQGVMLLNRVLTVQPGNSNSHKGRGWEAVTEAAITALGQRDQPLVAILWGRQAQAVQKFLGDTPCITSAHPSPLSASRGFFGSRPFSTTNRMLDDLGATPVDWRL.

Asp-81 acts as the Proton acceptor in catalysis.

It belongs to the uracil-DNA glycosylase (UDG) superfamily. UNG family.

It is found in the cytoplasm. The catalysed reaction is Hydrolyzes single-stranded DNA or mismatched double-stranded DNA and polynucleotides, releasing free uracil.. Its function is as follows. Excises uracil residues from the DNA which can arise as a result of misincorporation of dUMP residues by DNA polymerase or due to deamination of cytosine. The sequence is that of Uracil-DNA glycosylase from Corynebacterium efficiens (strain DSM 44549 / YS-314 / AJ 12310 / JCM 11189 / NBRC 100395).